The sequence spans 301 residues: Fructokinase (301 aa).

Residues histidine 165, cysteine 181, histidine 184, and cysteine 187 each coordinate Zn(2+).

The protein belongs to the ROK (NagC/XylR) family. Mg(2+) is required as a cofactor.

The enzyme catalyses D-fructose + ATP = D-fructose 6-phosphate + ADP + H(+). Its activity is regulated as follows. Inhibition by zinc ions. The protein is Fructokinase (frk) of Zymomonas mobilis subsp. mobilis (strain ATCC 31821 / ZM4 / CP4).